Consider the following 98-residue polypeptide: Small ribosomal subunit protein bS20 (98 aa).

This sequence belongs to the bacterial ribosomal protein bS20 family.

In terms of biological role, binds directly to 16S ribosomal RNA. The chain is Small ribosomal subunit protein bS20 from Parasynechococcus marenigrum (strain WH8102).